The following is a 309-amino-acid chain: Homoserine O-succinyltransferase (309 aa).

Cys142 functions as the Acyl-thioester intermediate in the catalytic mechanism. The substrate site is built by Lys163 and Ser192. The active-site Proton acceptor is the His235. Glu237 is a catalytic residue. Arg249 lines the substrate pocket.

Belongs to the MetA family.

Its subcellular location is the cytoplasm. It catalyses the reaction L-homoserine + succinyl-CoA = O-succinyl-L-homoserine + CoA. It participates in amino-acid biosynthesis; L-methionine biosynthesis via de novo pathway; O-succinyl-L-homoserine from L-homoserine: step 1/1. Functionally, transfers a succinyl group from succinyl-CoA to L-homoserine, forming succinyl-L-homoserine. The sequence is that of Homoserine O-succinyltransferase from Proteus mirabilis (strain HI4320).